We begin with the raw amino-acid sequence, 127 residues long: Small ribosomal subunit protein uS12 (127 aa).

The residue at position 89 (aspartate 89) is a 3-methylthioaspartic acid. The disordered stretch occupies residues 104 to 127; the sequence is TQGVKDRKQARSKYGTKRAKAGKK. The span at 113 to 127 shows a compositional bias: basic residues; the sequence is ARSKYGTKRAKAGKK.

The protein belongs to the universal ribosomal protein uS12 family. Part of the 30S ribosomal subunit. Contacts proteins S8 and S17. May interact with IF1 in the 30S initiation complex.

Functionally, with S4 and S5 plays an important role in translational accuracy. In terms of biological role, interacts with and stabilizes bases of the 16S rRNA that are involved in tRNA selection in the A site and with the mRNA backbone. Located at the interface of the 30S and 50S subunits, it traverses the body of the 30S subunit contacting proteins on the other side and probably holding the rRNA structure together. The combined cluster of proteins S8, S12 and S17 appears to hold together the shoulder and platform of the 30S subunit. The polypeptide is Small ribosomal subunit protein uS12 (Herminiimonas arsenicoxydans).